Reading from the N-terminus, the 405-residue chain is MAGVLGMILAGGEGSRLKPLTETRTKPAVPFGGSYRLIDFALNNFVNADLMRIYVLTQFKSQSLYIHMKKGWNLSGITDRFIDIIPAQMRDGKRWYEGTADAIYQNLRFVEIVAPDQVCIFGSDHIYKMDIRQMLDFHRRMEAELTVSALRMPISQASQFGVIEVDENGKMVGFEEKPSNPKSIPGEPEWALVSMGNYIFEAETLSKELREDAENNQSSHDFGKDIIPKMFPRGKVYVYDFTTNKIKGEKESTYWRDVGTIESYWSAHMDLLDKDPEFSLYNRSWPLHTYYPPLPPATFVDVKDKKVKITDSLISGGSYIQGSTIYKSVLGFRSNIAAGSFISESVILGDVKIGAGCTIKRAIIDKDVEIAAGTIIGEDLEMDRKRFHVSDEGIVVIAKGSKVGF.

Alpha-D-glucose 1-phosphate-binding positions include Tyr-96, Gly-161, 176-177 (EK), and Ser-194.

It belongs to the bacterial/plant glucose-1-phosphate adenylyltransferase family. Homotetramer.

The enzyme catalyses alpha-D-glucose 1-phosphate + ATP + H(+) = ADP-alpha-D-glucose + diphosphate. It functions in the pathway glycan biosynthesis; glycogen biosynthesis. In terms of biological role, involved in the biosynthesis of ADP-glucose, a building block required for the elongation reactions to produce glycogen. Catalyzes the reaction between ATP and alpha-D-glucose 1-phosphate (G1P) to produce pyrophosphate and ADP-Glc. The polypeptide is Glucose-1-phosphate adenylyltransferase 1 (Vibrio cholerae serotype O1 (strain ATCC 39315 / El Tor Inaba N16961)).